The sequence spans 276 residues: MAGENPTASEYIQHHLQNLTFGNHPEHGWSFAHTAQEAKEMGFWAVHVDSLGWSIALGALFVWLFRKAAVKATSGVPSGLQNFVEIMVDFVDKSVKETFHGKNAVIAPLALTVFCWIFLMNLMDLVPVDFLPRLFQVITGDDHAYFKVVPTTDVNVTLGMSLSVFFLIIYYSIKVKGVGGFLGELTLQPFGKWMLPFNLLLEGVGLIAKPISLALRLFGNLYAGELLFILIALMPFWAQWALSVPWAIFHILVIVLQAFIFMMLTIVYLSMAHEDH.

5 helical membrane-spanning segments follow: residues 45–65 (AVHVDSLGWSIALGALFVWLF), 105–125 (VIAPLALTVFCWIFLMNLMDL), 154–173 (VNVTLGMSLSVFFLIIYYSI), 226–246 (LLFILIALMPFWAQWALSVPW), and 247–267 (AIFHILVIVLQAFIFMMLTIV).

Belongs to the ATPase A chain family. F-type ATPases have 2 components, CF(1) - the catalytic core - and CF(0) - the membrane proton channel. CF(1) has five subunits: alpha(3), beta(3), gamma(1), delta(1), epsilon(1). CF(0) has three main subunits: a(1), b(2) and c(9-12). The alpha and beta chains form an alternating ring which encloses part of the gamma chain. CF(1) is attached to CF(0) by a central stalk formed by the gamma and epsilon chains, while a peripheral stalk is formed by the delta and b chains.

The protein resides in the cell inner membrane. Functionally, key component of the proton channel; it plays a direct role in the translocation of protons across the membrane. The polypeptide is ATP synthase subunit a 2 (Hahella chejuensis (strain KCTC 2396)).